Here is a 269-residue protein sequence, read N- to C-terminus: Enoyl-[acyl-carrier-protein] reductase [NADH] (269 aa).

Residues 20 to 21 (SI), 64 to 65 (DV), and 95 to 96 (IG) contribute to the NAD(+) site. Tyr158 is a binding site for substrate. NAD(+)-binding residues include Lys165 and Ile194. At Thr266 the chain carries Phosphothreonine.

It belongs to the short-chain dehydrogenases/reductases (SDR) family. FabI subfamily. As to quaternary structure, homodimer. Homotetramer. Post-translationally, is phosphorylated in vivo. Phosphorylation on Thr-266 decreases enzymatic activity.

The protein localises to the secreted. It localises to the cell wall. The catalysed reaction is a 2,3-saturated acyl-[ACP] + NAD(+) = a (2E)-enoyl-[ACP] + NADH + H(+). It catalyses the reaction a 2,3-saturated acyl-CoA + NAD(+) = a (2E)-enoyl-CoA + NADH + H(+). It carries out the reaction (2E)-octenoyl-CoA + NADH + H(+) = octanoyl-CoA + NAD(+). The enzyme catalyses (2E)-dodecenoyl-CoA + NADH + H(+) = dodecanoyl-CoA + NAD(+). The protein operates within lipid metabolism; mycolic acid biosynthesis. Its activity is regulated as follows. InhA activity is controlled via phosphorylation: phosphorylation on Thr-266 decreases InhA activity and likely negatively regulates biosynthesis of mycolic acids and growth of the bacterium. InhA activity is likely inhibited by activated isoniazid, hexadecynoyl-CoA and octadecynoyl-CoA, which also block the biosynthesis of mycolic acids. The antitubercular pro-drug isoniazid (INH) is oxidatively activated by the catalase-peroxidase KatG and then covalently binds NAD to form an adduct that inhibits the activity of InhA. The inhibitory adduct is the isonicotinic-acyl-NADH where the isonicotinic-acyl group replaces the 4S (and not the 4R) hydrogen of NADH. Similarly, the antitubercular pro-drugs ethionamide (ETH) and prothionamide (PTH) are activated by the flavoprotein monooxygenase EthA, and forms an adduct with NAD (ETH-NAD and PTH-NAD, respectively) that is a tight-binding inhibitor of InhA. Enoyl-ACP reductase of the type II fatty acid syntase (FAS-II) system, which is involved in the biosynthesis of mycolic acids, a major component of mycobacterial cell walls. Catalyzes the NADH-dependent reduction of the double bond of 2-trans-enoyl-[acyl-carrier protein], an essential step in the fatty acid elongation cycle of the FAS-II pathway. Shows preference for long-chain fatty acyl thioester substrates (&gt;C16), and can also use 2-trans-enoyl-CoAs as alternative substrates. The mycobacterial FAS-II system utilizes the products of the FAS-I system as primers to extend fatty acyl chain lengths up to C56, forming the meromycolate chain that serves as the precursor for final mycolic acids. Its function is as follows. Is the primary target of the first-line antitubercular drug isoniazid (INH) and of the second-line drug ethionamide (ETH). Overexpressed inhA confers INH and ETH resistance to M.smegmatis. The mechanism of isoniazid action against InhA is covalent attachment of the activated form of the drug to the nicotinamide ring of NAD and binding of the INH-NAD adduct to the active site of InhA. Similarly, the ETH-NAD adduct binds InhA. This is Enoyl-[acyl-carrier-protein] reductase [NADH] from Mycolicibacterium smegmatis (strain ATCC 700084 / mc(2)155) (Mycobacterium smegmatis).